A 365-amino-acid chain; its full sequence is Probable 7-methylxanthine methyltransferase 4 (365 aa).

Tyr-18 lines the S-adenosyl-L-homocysteine pocket. Theobromine is bound at residue Thr-25. S-adenosyl-L-homocysteine is bound by residues Cys-62, Gln-67, Asp-99, Leu-100, Ser-132, and Phe-133. Residues Tyr-150, His-153, and Trp-154 each contribute to the theobromine site. 4 residues coordinate Mg(2+): Asn-170, Asp-256, Phe-258, and Asn-259. Position 311 (Phe-311) interacts with theobromine.

Belongs to the methyltransferase superfamily. Type-7 methyltransferase family. Mg(2+) is required as a cofactor.

It carries out the reaction 7-methylxanthine + S-adenosyl-L-methionine = theobromine + S-adenosyl-L-homocysteine + H(+). It functions in the pathway alkaloid biosynthesis. Involved in the biosynthesis of theobromine. The chain is Probable 7-methylxanthine methyltransferase 4 from Theobroma cacao (Cacao).